The following is a 457-amino-acid chain: RuvB-like helicase 1 (457 aa).

Gly-73–Thr-80 contributes to the ATP binding site.

It belongs to the RuvB family. May form heterododecamers with RVB2. Component of the SWR1 chromatin remodeling complex, the INO80 chromatin remodeling complex, and of the R2TP complex.

The protein resides in the nucleus. The enzyme catalyses ATP + H2O = ADP + phosphate + H(+). In terms of biological role, DNA helicase which participates in several chromatin remodeling complexes, including the SWR1 and the INO80 complexes. The SWR1 complex mediates the ATP-dependent exchange of histone H2A for the H2A variant HZT1 leading to transcriptional regulation of selected genes by chromatin remodeling. The INO80 complex remodels chromatin by shifting nucleosomes and is involved in DNA repair. Also involved in pre-rRNA processing. This chain is RuvB-like helicase 1 (RVB1), found in Kluyveromyces lactis (strain ATCC 8585 / CBS 2359 / DSM 70799 / NBRC 1267 / NRRL Y-1140 / WM37) (Yeast).